The following is a 489-amino-acid chain: Betaine aldehyde dehydrogenase (489 aa).

N93 lines the K(+) pocket. An NAD(+)-binding site is contributed by 150-152; the sequence is GAW. K162 (charge relay system) is an active-site residue. 176–179 contacts NAD(+); the sequence is KPSE. V180 lines the K(+) pocket. NAD(+) is bound at residue 229-232; the sequence is EVGT. L245 contacts K(+). E251 functions as the Proton acceptor in the catalytic mechanism. G253, C285, and E386 together coordinate NAD(+). C285 functions as the Nucleophile in the catalytic mechanism. C285 carries the cysteine sulfenic acid (-SOH) modification. K456 and G459 together coordinate K(+). E463 serves as the catalytic Charge relay system.

It belongs to the aldehyde dehydrogenase family. In terms of assembly, dimer of dimers. The cofactor is K(+).

The catalysed reaction is betaine aldehyde + NAD(+) + H2O = glycine betaine + NADH + 2 H(+). Its pathway is amine and polyamine biosynthesis; betaine biosynthesis via choline pathway; betaine from betaine aldehyde: step 1/1. Involved in the biosynthesis of the osmoprotectant glycine betaine. Catalyzes the irreversible oxidation of betaine aldehyde to the corresponding acid. The protein is Betaine aldehyde dehydrogenase of Chromohalobacter salexigens (strain ATCC BAA-138 / DSM 3043 / CIP 106854 / NCIMB 13768 / 1H11).